The following is a 365-amino-acid chain: 1-acyl-sn-glycerol-3-phosphate acyltransferase epsilon (365 aa).

A helical transmembrane segment spans residues 15 to 35 (LLPSVLLLGSAPTYLLAWTLW). The HXXXXD motif signature appears at 93–98 (HQSTVD). A helical transmembrane segment spans residues 345 to 365 (LYMGTWLYGTLLGCLWFVIKA).

It belongs to the 1-acyl-sn-glycerol-3-phosphate acyltransferase family. As to expression, widely expressed.

The protein resides in the endoplasmic reticulum membrane. It is found in the nucleus envelope. Its subcellular location is the mitochondrion. It carries out the reaction a 1-acyl-sn-glycero-3-phosphate + an acyl-CoA = a 1,2-diacyl-sn-glycero-3-phosphate + CoA. The catalysed reaction is 1-(9Z-octadecenoyl)-sn-glycero-3-phosphate + tetradecanoyl-CoA = 1-(9Z)-octadecenoyl-2-tetradecanoyl-sn-glycero-3-phosphate + CoA. It catalyses the reaction pentadecanoyl-CoA + 1-(9Z-octadecenoyl)-sn-glycero-3-phosphate = 1-(9Z)-octadecenoyl-2-pentadecanoyl-sn-glycero-3-phosphate + CoA. The enzyme catalyses 1-(9Z-octadecenoyl)-sn-glycero-3-phosphate + octadecanoyl-CoA = 1-(9Z-octadecenoyl)-2-octadecanoyl-sn-glycero-3-phosphate + CoA. It carries out the reaction nonadecanoyl-CoA + 1-(9Z-octadecenoyl)-sn-glycero-3-phosphate = 1-(9Z)-octadecenoyl-2-nonadecanoyl-sn-glycero-3-phosphate + CoA. The catalysed reaction is 1-(9Z-octadecenoyl)-sn-glycero-3-phosphoethanolamine + (9Z)-octadecenoyl-CoA = 1,2-di-(9Z-octadecenoyl)-sn-glycero-3-phosphoethanolamine + CoA. It catalyses the reaction 1-(9Z-octadecenoyl)-sn-glycero-3-phosphocholine + (9Z)-octadecenoyl-CoA = 1,2-di-(9Z-octadecenoyl)-sn-glycero-3-phosphocholine + CoA. The enzyme catalyses 1-(9Z-octadecenoyl)-sn-glycero-3-phospho-(1D-myo-inositol) + (5Z,8Z,11Z,14Z)-eicosatetraenoyl-CoA = 1-(9Z-octadecenoyl)-2-(5Z,8Z,11Z,14Z-eicosatetraenoyl)-sn-glycero-3-phospho-1D-myo-inositol + CoA. It carries out the reaction 1-(9Z-octadecenoyl)-sn-glycero-3-phospho-L-serine + (9Z)-octadecenoyl-CoA = 1,2-di-(9Z)-octadecenoyl-sn-glycero-3-phospho-L-serine + CoA. The catalysed reaction is 1-(9Z-octadecenoyl)-sn-glycero-3-phospho-L-serine + (5Z,8Z,11Z,14Z)-eicosatetraenoyl-CoA = 1-(9Z-octadecenoyl)-2-(5Z,8Z,11Z,14Z-eicosatetraenoyl)-sn-glycero-3-phospho-L-serine + CoA. It catalyses the reaction 1-hexadecanoyl-sn-glycero-3-phosphate + (9Z)-octadecenoyl-CoA = 1-hexadecanoyl-2-(9Z-octadecenoyl)-sn-glycero-3-phosphate + CoA. The enzyme catalyses 1-heptadecanoyl-sn-glycero-3-phosphate + (9Z)-octadecenoyl-CoA = 1-heptadecanoyl-2-(9Z)-octadecenoyl-sn-glycero-3-phosphate + CoA. It carries out the reaction 1-(5Z,8Z,11Z,14Z-eicosatetraenoyl)-sn-glycero-3-phosphate + (9Z)-octadecenoyl-CoA = 1-(5Z,8Z,11Z,14Z)-eicosatetraenoyl-2-(9Z)-octadecenoyl-sn-glycero-3-phosphate + CoA. The catalysed reaction is 1-octadecanoyl-sn-glycero-3-phosphate + (9Z)-octadecenoyl-CoA = 1-octadecanoyl-2-(9Z-octadecenoyl)-sn-glycero-3-phosphate + CoA. It catalyses the reaction 1-(9Z-octadecenoyl)-sn-glycero-3-phosphate + (5Z,8Z,11Z,14Z)-eicosatetraenoyl-CoA = 1-(9Z)-octadecenoyl-2-(5Z,8Z,11Z,14Z)-eicosatetraenoyl-sn-glycero-3-phosphate + CoA. The enzyme catalyses heptadecanoyl-CoA + 1-(9Z-octadecenoyl)-sn-glycero-3-phosphate = 1-(9Z)-octadecenoyl-2-heptadecanoyl-sn-glycero-3-phosphate + CoA. It carries out the reaction 1-(9Z-octadecenoyl)-sn-glycero-3-phosphocholine + (5Z,8Z,11Z,14Z)-eicosatetraenoyl-CoA = 1-(9Z)-octadecenoyl-2-(5Z,8Z,11Z,14Z)-icosatetraenoyl-sn-glycero-3-phosphocholine + CoA. The catalysed reaction is 1-(9Z-octadecenoyl)-sn-glycero-3-phosphate + (9Z)-octadecenoyl-CoA = 1,2-di-(9Z-octadecenoyl)-sn-glycero-3-phosphate + CoA. It catalyses the reaction 1-(9Z-octadecenoyl)-sn-glycero-3-phosphate + hexadecanoyl-CoA = 1-hexadecanoyl-2-(9Z-octadecenoyl)-sn-glycero-3-phosphate + CoA. The protein operates within phospholipid metabolism; CDP-diacylglycerol biosynthesis; CDP-diacylglycerol from sn-glycerol 3-phosphate: step 2/3. Its function is as follows. Converts 1-acyl-sn-glycerol-3-phosphate (lysophosphatidic acid or LPA) into 1,2-diacyl-sn-glycerol-3-phosphate (phosphatidic acid or PA) by incorporating an acyl moiety at the sn-2 position of the glycerol backbone. Acts on LPA containing saturated or unsaturated fatty acids C15:0-C20:4 at the sn-1 position using C18:1-CoA as the acyl donor. Also acts on lysophosphatidylethanolamine using oleoyl-CoA, but not arachidonoyl-CoA, and lysophosphatidylinositol using arachidonoyl-CoA, but not oleoyl-CoA. Activity toward lysophosphatidylglycerol not detectable. The sequence is that of 1-acyl-sn-glycerol-3-phosphate acyltransferase epsilon (Agpat5) from Mus musculus (Mouse).